We begin with the raw amino-acid sequence, 327 residues long: Xylosidase/arabinosidase 43A (327 aa).

Residue Asp12 is the Proton acceptor of the active site. The active-site Proton donor is Glu228.

Belongs to the glycosyl hydrolase 43 family.

It localises to the secreted. The enzyme catalyses Hydrolysis of (1-&gt;4)-beta-D-xylans, to remove successive D-xylose residues from the non-reducing termini.. It catalyses the reaction Hydrolysis of terminal non-reducing alpha-L-arabinofuranoside residues in alpha-L-arabinosides.. With respect to regulation, activity is inhibited by Ag(+), Li(+), Pb(2+), Cu(2+), Cr(3+), Co(3+), Fe(3+), Ni(2+), Mg(2+), Zn(2+), EDTA and SDS; but not by Mn(2+), Ca(2+) and beta-mercaptoethanol. In terms of biological role, bifunctional beta-xylosidase/alpha-L-arabinosidases with a low level of xylanase activity. Is most active on 4-nitrophenyl beta-D-xylopyranoside (pNPX) (defined as 100%), moderate on p-nitrophenyl-alpha-L-arabinofuranoside (pNPA) (23.7%), and weak on beechwood xylan (15.9%) and birchwood xylan (15.2%). Is able to attack xylooligosacchardies with degrees of polymerisation of 2-5, releasing the amounts of reducing sugars in the order of xylopentose &gt; xylotetraose &gt; xylotriose &gt; xylobiose, i.e. the rate of xylose released from xylooligosacchardies increased with the chain length. No activity is detected in the presence of carboxymethyl cellulose-sodium (CMC-Na), sugar beet arabinan, AZCL-arabinan (debranched), 4-nitrophenyl a-D - galactopyranoside, 2-nitrophenyl beta-D-galactopyranoside, and 4-nitrophenyl alpha-D-glucopyranoside. This is Xylosidase/arabinosidase 43A from Humicola insolens (Soft-rot fungus).